We begin with the raw amino-acid sequence, 271 residues long: Type III pantothenate kinase (271 aa).

ATP is bound at residue 6 to 13 (DVRNTNIV). Position 109-112 (109-112 (GADR)) interacts with substrate. The active-site Proton acceptor is D111. D131 contributes to the K(+) binding site. An ATP-binding site is contributed by T134. Position 186 (T186) interacts with substrate.

This sequence belongs to the type III pantothenate kinase family. In terms of assembly, homodimer. Requires NH4(+) as cofactor. It depends on K(+) as a cofactor.

The protein resides in the cytoplasm. It carries out the reaction (R)-pantothenate + ATP = (R)-4'-phosphopantothenate + ADP + H(+). It functions in the pathway cofactor biosynthesis; coenzyme A biosynthesis; CoA from (R)-pantothenate: step 1/5. In terms of biological role, catalyzes the phosphorylation of pantothenate (Pan), the first step in CoA biosynthesis. In Rhodococcus jostii (strain RHA1), this protein is Type III pantothenate kinase.